We begin with the raw amino-acid sequence, 192 residues long: Shikimate kinase (192 aa).

An ATP-binding site is contributed by 27 to 32; sequence GTGKTT. Residue T31 participates in Mg(2+) binding. The substrate site is built by D49, R73, and G95. R133 contributes to the ATP binding site. R152 serves as a coordination point for substrate.

The protein belongs to the shikimate kinase family. In terms of assembly, monomer. The cofactor is Mg(2+).

The protein localises to the cytoplasm. It carries out the reaction shikimate + ATP = 3-phosphoshikimate + ADP + H(+). The protein operates within metabolic intermediate biosynthesis; chorismate biosynthesis; chorismate from D-erythrose 4-phosphate and phosphoenolpyruvate: step 5/7. In terms of biological role, catalyzes the specific phosphorylation of the 3-hydroxyl group of shikimic acid using ATP as a cosubstrate. The protein is Shikimate kinase of Hahella chejuensis (strain KCTC 2396).